A 271-amino-acid polypeptide reads, in one-letter code: Formamidopyrimidine-DNA glycosylase (271 aa).

Proline 2 acts as the Schiff-base intermediate with DNA in catalysis. The active-site Proton donor is the glutamate 3. Lysine 58 functions as the Proton donor; for beta-elimination activity in the catalytic mechanism. DNA contacts are provided by histidine 92, arginine 111, and arginine 152. Residues 237–271 (TVYGREGEPCKQCGRVLKHAMIGQRATVWCGSCQR) form an FPG-type zinc finger. Arginine 261 (proton donor; for delta-elimination activity) is an active-site residue.

The protein belongs to the FPG family. Monomer. It depends on Zn(2+) as a cofactor.

The enzyme catalyses Hydrolysis of DNA containing ring-opened 7-methylguanine residues, releasing 2,6-diamino-4-hydroxy-5-(N-methyl)formamidopyrimidine.. The catalysed reaction is 2'-deoxyribonucleotide-(2'-deoxyribose 5'-phosphate)-2'-deoxyribonucleotide-DNA = a 3'-end 2'-deoxyribonucleotide-(2,3-dehydro-2,3-deoxyribose 5'-phosphate)-DNA + a 5'-end 5'-phospho-2'-deoxyribonucleoside-DNA + H(+). Functionally, involved in base excision repair of DNA damaged by oxidation or by mutagenic agents. Acts as a DNA glycosylase that recognizes and removes damaged bases. Has a preference for oxidized purines, such as 7,8-dihydro-8-oxoguanine (8-oxoG). Has AP (apurinic/apyrimidinic) lyase activity and introduces nicks in the DNA strand. Cleaves the DNA backbone by beta-delta elimination to generate a single-strand break at the site of the removed base with both 3'- and 5'-phosphates. The sequence is that of Formamidopyrimidine-DNA glycosylase from Xanthomonas oryzae pv. oryzae (strain MAFF 311018).